Consider the following 197-residue polypeptide: Adenylate kinase (197 aa).

12-17 (GSGKTT) contributes to the ATP binding site. Residues 34 to 63 (STGDMLREEVASGSELGKTIESYIAKGALV) form an NMP region. Residues T35, R40, 61 to 63 (ALV), 88 to 91 (GYPR), and Q95 each bind AMP. Residues 130–144 (GRRAEAAPGEERSDD) form an LID region. R131 provides a ligand contact to ATP. Positions 141 and 152 each coordinate AMP. R180 is a binding site for ATP.

The protein belongs to the adenylate kinase family. As to quaternary structure, monomer.

It is found in the cytoplasm. It catalyses the reaction AMP + ATP = 2 ADP. Its pathway is purine metabolism; AMP biosynthesis via salvage pathway; AMP from ADP: step 1/1. Functionally, catalyzes the reversible transfer of the terminal phosphate group between ATP and AMP. Plays an important role in cellular energy homeostasis and in adenine nucleotide metabolism. This chain is Adenylate kinase, found in Sulfurovum sp. (strain NBC37-1).